Here is a 542-residue protein sequence, read N- to C-terminus: Glucose-6-phosphate isomerase (542 aa).

Glu-354 acts as the Proton donor in catalysis. Residues His-385 and Lys-505 contribute to the active site.

It belongs to the GPI family.

It localises to the cytoplasm. It carries out the reaction alpha-D-glucose 6-phosphate = beta-D-fructose 6-phosphate. It participates in carbohydrate biosynthesis; gluconeogenesis. It functions in the pathway carbohydrate degradation; glycolysis; D-glyceraldehyde 3-phosphate and glycerone phosphate from D-glucose: step 2/4. Catalyzes the reversible isomerization of glucose-6-phosphate to fructose-6-phosphate. The polypeptide is Glucose-6-phosphate isomerase (Nitrosospira multiformis (strain ATCC 25196 / NCIMB 11849 / C 71)).